We begin with the raw amino-acid sequence, 263 residues long: Aquaporin Lacbi1:247946 (263 aa).

The Cytoplasmic segment spans residues 1-18 (MKLTISHHKCAIRKVMAE). The helical transmembrane segment at 19-39 (FVGVALLVIFGAGTACQVVLS) threads the bilayer. Over 40-45 (TNPSSF) the chain is Extracellular. The chain crosses the membrane as a helical span at residues 46–66 (LSINFGWAIGIATGAWVSAGI). At 67 to 89 (SGGHINPAITIAMATYRGFPWRE) the chain is on the cytoplasmic side. Positions 72–74 (NPA) match the NPA 1 motif. A helical membrane pass occupies residues 90–110 (VPGYIFAQALGGFVGAALVYA). Over 111–143 (NYFHAIDIFEGGHIRTQATASLFATFALPYMTQ) the chain is Extracellular. Residues 144 to 164 (ASCFFSEFLATAVLFIVFLAL) traverse the membrane as a helical segment. At 165–169 (NDKHN) the chain is on the cytoplasmic side. The chain crosses the membrane as a helical span at residues 170–190 (GALTNGLLPFALFILFIGLGA). Residues 191-227 (SLGMQTGYAVNPARDFGPRLFLAMAGYGKAVFNYRRQ) are Extracellular-facing. The NPA 2 motif lies at 201–203 (NPA). A helical membrane pass occupies residues 228–248 (YWIWAPIIAPILGAQAGGLLY). Residues 249-263 (DTSIYNGDDSPIKWR) are Cytoplasmic-facing.

The protein belongs to the MIP/aquaporin (TC 1.A.8) family.

The protein resides in the membrane. The catalysed reaction is H2O(in) = H2O(out). Functionally, water channel required to facilitate the transport of water across membranes. Shows low but significant water conductivity, but no glycerol nor ammonium transport activities. This is Aquaporin Lacbi1:247946 from Laccaria bicolor (strain S238N-H82 / ATCC MYA-4686) (Bicoloured deceiver).